We begin with the raw amino-acid sequence, 1517 residues long: DNA-directed RNA polymerase subunit beta' (1517 aa).

Zn(2+) contacts are provided by cysteine 71, cysteine 73, cysteine 86, and cysteine 89. Positions 482, 484, and 486 each coordinate Mg(2+). Zn(2+)-binding residues include cysteine 812, cysteine 886, cysteine 893, and cysteine 896.

This sequence belongs to the RNA polymerase beta' chain family. As to quaternary structure, the RNAP catalytic core consists of 2 alpha, 1 beta, 1 beta' and 1 omega subunit. When a sigma factor is associated with the core the holoenzyme is formed, which can initiate transcription. Mg(2+) is required as a cofactor. It depends on Zn(2+) as a cofactor.

It catalyses the reaction RNA(n) + a ribonucleoside 5'-triphosphate = RNA(n+1) + diphosphate. In terms of biological role, DNA-dependent RNA polymerase catalyzes the transcription of DNA into RNA using the four ribonucleoside triphosphates as substrates. This Campylobacter jejuni subsp. jejuni serotype O:23/36 (strain 81-176) protein is DNA-directed RNA polymerase subunit beta'.